The primary structure comprises 227 residues: Fibrillarin-like rRNA/tRNA 2'-O-methyltransferase (227 aa).

S-adenosyl-L-methionine is bound by residues 86 to 87 (TT), 105 to 106 (EF), 130 to 131 (DA), and 150 to 153 (DVAQ).

Belongs to the methyltransferase superfamily. Fibrillarin family. As to quaternary structure, interacts with nop5. Component of box C/D small ribonucleoprotein (sRNP) particles that contain rpl7ae, FlpA and nop5, plus a guide RNA.

Involved in pre-rRNA and tRNA processing. Utilizes the methyl donor S-adenosyl-L-methionine to catalyze the site-specific 2'-hydroxyl methylation of ribose moieties in rRNA and tRNA. Site specificity is provided by a guide RNA that base pairs with the substrate. Methylation occurs at a characteristic distance from the sequence involved in base pairing with the guide RNA. This chain is Fibrillarin-like rRNA/tRNA 2'-O-methyltransferase, found in Pyrococcus horikoshii (strain ATCC 700860 / DSM 12428 / JCM 9974 / NBRC 100139 / OT-3).